The primary structure comprises 155 residues: Small ribosomal subunit protein uS9 (155 aa).

The protein belongs to the universal ribosomal protein uS9 family.

This is Small ribosomal subunit protein uS9 from Sinorhizobium fredii (strain NBRC 101917 / NGR234).